The chain runs to 308 residues: 1D-myo-inositol 2-acetamido-2-deoxy-alpha-D-glucopyranoside deacetylase (308 aa).

3 residues coordinate Zn(2+): His13, Asp16, and His147.

It belongs to the MshB deacetylase family. Zn(2+) serves as cofactor.

It carries out the reaction 1D-myo-inositol 2-acetamido-2-deoxy-alpha-D-glucopyranoside + H2O = 1D-myo-inositol 2-amino-2-deoxy-alpha-D-glucopyranoside + acetate. Its function is as follows. Catalyzes the deacetylation of 1D-myo-inositol 2-acetamido-2-deoxy-alpha-D-glucopyranoside (GlcNAc-Ins) in the mycothiol biosynthesis pathway. This chain is 1D-myo-inositol 2-acetamido-2-deoxy-alpha-D-glucopyranoside deacetylase, found in Mycobacterium leprae (strain Br4923).